Reading from the N-terminus, the 938-residue chain is Isoleucine--tRNA ligase (938 aa).

The 'HIGH' region signature appears at 58–68; the sequence is PYANGSIHIGH. E561 serves as a coordination point for L-isoleucyl-5'-AMP. The short motif at 602–606 is the 'KMSKS' region element; that stretch reads KMSKS. K605 contacts ATP. 4 residues coordinate Zn(2+): C901, C904, C921, and C924.

Belongs to the class-I aminoacyl-tRNA synthetase family. IleS type 1 subfamily. As to quaternary structure, monomer. Requires Zn(2+) as cofactor.

Its subcellular location is the cytoplasm. It catalyses the reaction tRNA(Ile) + L-isoleucine + ATP = L-isoleucyl-tRNA(Ile) + AMP + diphosphate. In terms of biological role, catalyzes the attachment of isoleucine to tRNA(Ile). As IleRS can inadvertently accommodate and process structurally similar amino acids such as valine, to avoid such errors it has two additional distinct tRNA(Ile)-dependent editing activities. One activity is designated as 'pretransfer' editing and involves the hydrolysis of activated Val-AMP. The other activity is designated 'posttransfer' editing and involves deacylation of mischarged Val-tRNA(Ile). In Erwinia tasmaniensis (strain DSM 17950 / CFBP 7177 / CIP 109463 / NCPPB 4357 / Et1/99), this protein is Isoleucine--tRNA ligase.